Here is a 271-residue protein sequence, read N- to C-terminus: Tryptophan synthase alpha chain (271 aa).

Active-site proton acceptor residues include E49 and D60.

It belongs to the TrpA family. Tetramer of two alpha and two beta chains.

The catalysed reaction is (1S,2R)-1-C-(indol-3-yl)glycerol 3-phosphate + L-serine = D-glyceraldehyde 3-phosphate + L-tryptophan + H2O. Its pathway is amino-acid biosynthesis; L-tryptophan biosynthesis; L-tryptophan from chorismate: step 5/5. Functionally, the alpha subunit is responsible for the aldol cleavage of indoleglycerol phosphate to indole and glyceraldehyde 3-phosphate. This is Tryptophan synthase alpha chain from Buchnera aphidicola subsp. Schizaphis graminum (strain Sg).